We begin with the raw amino-acid sequence, 172 residues long: Large ribosomal subunit protein uL10 (172 aa).

This sequence belongs to the universal ribosomal protein uL10 family. As to quaternary structure, part of the ribosomal stalk of the 50S ribosomal subunit. The N-terminus interacts with L11 and the large rRNA to form the base of the stalk. The C-terminus forms an elongated spine to which L12 dimers bind in a sequential fashion forming a multimeric L10(L12)X complex.

Its function is as follows. Forms part of the ribosomal stalk, playing a central role in the interaction of the ribosome with GTP-bound translation factors. The chain is Large ribosomal subunit protein uL10 from Rhodopseudomonas palustris (strain TIE-1).